The sequence spans 40 residues: Fibrinolytic protease (40 aa).

The Peptidase S1 domain maps to 1–40; sequence IVGGNEVTPHAYPWQVGLFIDDMYFCGGSISVTLTGWGKP.

It belongs to the peptidase S1 family.

Its subcellular location is the secreted. It localises to the extracellular space. In terms of biological role, serine protease with fibrinolytic activity. This Euphausia superba (Antarctic krill) protein is Fibrinolytic protease.